The sequence spans 232 residues: dTTP/UTP pyrophosphatase (232 aa).

The Proton acceptor role is filled by Asp-103.

Belongs to the Maf family. YhdE subfamily. It depends on a divalent metal cation as a cofactor.

Its subcellular location is the cytoplasm. It catalyses the reaction dTTP + H2O = dTMP + diphosphate + H(+). The catalysed reaction is UTP + H2O = UMP + diphosphate + H(+). Its function is as follows. Nucleoside triphosphate pyrophosphatase that hydrolyzes dTTP and UTP. May have a dual role in cell division arrest and in preventing the incorporation of modified nucleotides into cellular nucleic acids. The protein is dTTP/UTP pyrophosphatase of Bartonella henselae (strain ATCC 49882 / DSM 28221 / CCUG 30454 / Houston 1) (Rochalimaea henselae).